The chain runs to 425 residues: Tol-Pal system protein TolB (425 aa).

Positions 1-23 are cleaved as a signal peptide; it reads MQMMKKRILLCLLVGMTCLPVLA.

The protein belongs to the TolB family. In terms of assembly, the Tol-Pal system is composed of five core proteins: the inner membrane proteins TolA, TolQ and TolR, the periplasmic protein TolB and the outer membrane protein Pal. They form a network linking the inner and outer membranes and the peptidoglycan layer.

The protein resides in the periplasm. In terms of biological role, part of the Tol-Pal system, which plays a role in outer membrane invagination during cell division and is important for maintaining outer membrane integrity. This is Tol-Pal system protein TolB from Albidiferax ferrireducens (strain ATCC BAA-621 / DSM 15236 / T118) (Rhodoferax ferrireducens).